Reading from the N-terminus, the 111-residue chain is Transcription factor S (111 aa).

The Zn(2+) site is built by C4, C7, C24, C27, C72, C75, C100, and C103. Residues 4–27 (CPKCGSMMMPRKENGKTVYKCSKC) form a C4-type zinc finger. The TFIIS-type zinc-finger motif lies at 68 to 108 (RGISCPSCGNDEAYFWILQTRSADEPATRFYKCTKCGKVWR).

It belongs to the archaeal RpoM/eukaryotic RPA12/RPB9/RPC11 RNA polymerase family.

In terms of biological role, induces RNA cleavage activity in the RNA polymerase. In its presence, the cleavage activity of the RNA polymerase truncates the RNA back to position +15 in a stepwise manner by releasing mainly dinucleotides from the 3'-end of the nascent RNA. The truncated RNAs are able to continue elongation. Involved in transcriptional proofreading and fidelity. Misincorporation of nucleotides during elongation of transcription leads to arrested elongation complexes which are rescued by TFS-promoted removal of a dinucleotide from the 3'-end. TFS is able to induce a cleavage resynthesis cycle in stalled elongation complexes (resulting from the next missing nucleotide or a reduced incorporation rate of a wrong nucleotide) preventing misincorporation and enabling proofreading in a post-incorporation manner. Pausing of elongation complexes is the main determinant of TFS-induced RNA cleavage. This chain is Transcription factor S, found in Sulfolobus acidocaldarius (strain ATCC 33909 / DSM 639 / JCM 8929 / NBRC 15157 / NCIMB 11770).